The primary structure comprises 890 residues: Potassium/sodium hyperpolarization-activated cyclic nucleotide-gated channel 1 (890 aa).

Residues 1–93 (MEGGGKPNSS…AEGPRRQYGF (93 aa)) form a disordered region. Over 1-142 (MEGGGKPNSS…WIIHPYSDFR (142 aa)) the chain is Cytoplasmic. Low complexity predominate over residues 8–34 (NSSSNSRDDGNSVFPAKASATGAGPAA). Over residues 62-77 (DGGGGGGGGGGGGEEP) the composition is skewed to gly residues. A helical transmembrane segment spans residues 143–164 (FYWDLIMLIMMVGNLVIIPVGI). Residues 165 to 173 (TFFTEQTTT) lie on the Extracellular side of the membrane. The chain crosses the membrane as a helical span at residues 174-194 (PWIIFNVASDTVFLLDLIMNF). At 195 to 215 (RTGTVNEDSSEIILDPKVIKM) the chain is on the cytoplasmic side. The helical transmembrane segment at 216-236 (NYLKSWFVVDFISSIPVDYIF) threads the bilayer. At 237–260 (LIVEKGMDSEVYKTARALRIVRFT) the chain is on the extracellular side. The helical; Voltage-sensor transmembrane segment at 261–281 (KILSLLRLLRLSRLIRYIHQW) threads the bilayer. Over 282-295 (EEIFHMTYDLASAV) the chain is Cytoplasmic. The helical transmembrane segment at 296–318 (VRIFNLIGMMLLLCHWDGCLQFL) threads the bilayer. Over 319–344 (VPLLQDFPPDCWVSLNEMVNDSWGKQ) the chain is Extracellular. A glycan (N-linked (GlcNAc...) asparagine) is linked at Asn-338. Residues 345-366 (YSYALFKAMSHMLCIGYGAQAP) constitute an intramembrane region (pore-forming). A Selectivity filter motif is present at residues 358–362 (CIGYG). The Extracellular portion of the chain corresponds to 367–371 (VSMSD). Residues 372–392 (LWITMLSMIVGATCYAMFVGH) traverse the membrane as a helical segment. Over 393–890 (ATALIQSLDS…AEKPRFASNL (498 aa)) the chain is Cytoplasmic. The 3',5'-cyclic AMP site is built by Gly-539, Glu-540, Cys-542, Arg-549, Thr-550, Arg-590, and Arg-593. Low complexity-rich tracts occupy residues 644 to 691 (MTTL…PQPS) and 731 to 749 (QQQP…TQPQ). Disordered stretches follow at residues 644–692 (MTTL…QPSA), 725–796 (SQLS…LPHE), and 845–890 (MSSG…ASNL). A compositionally biased stretch (polar residues) spans 770–780 (STQALHNTNLT). The segment covering 854–865 (RGVPPAPPPPAA) has biased composition (pro residues). Basic and acidic residues predominate over residues 880–890 (DAEKPRFASNL).

The protein belongs to the potassium channel HCN family. In terms of assembly, homotetramer. Heterotetramer with HCN2. The potassium channel is composed of a homo- or heterotetrameric complex of pore-forming subunits. Interacts with KCNE2. Interacts with the SH3 domain of CSK. Detected in brain, in particular in amygdala and hippocampus, while expression in caudate nucleus, corpus callosum, substantia nigra, subthalamic nucleus and thalamus is very low or not detectable. Detected at very low levels in muscle and pancreas.

The protein resides in the cell membrane. The catalysed reaction is Na(+)(in) = Na(+)(out). It carries out the reaction K(+)(in) = K(+)(out). Its activity is regulated as follows. Activated by cAMP, and at 10-100 times higher concentrations, also by cGMP. cAMP binding promotes tetramerization and formation of an active channel. Compared to other family members, cAMP has less stimulatory effect on HCN1 because part of the molecules already contain bound cAMP and form homotetramers when cAMP levels are low, this inherent tetramerization in HCN1 results in a weaker response to increased cAMP. Inhibited by Cs(1+), zatebradine, capsazepine and ZD7288. Its function is as follows. Hyperpolarization-activated ion channel that are permeable to sodium and potassium ions. Displays lower selectivity for K(+) over Na(+) ions. Contributes to the native pacemaker currents in heart (If) and in the generation of the I(h) current which controls neuron excitability. Participates in cerebellar mechanisms of motor learning. May mediate responses to sour stimuli. The sequence is that of Potassium/sodium hyperpolarization-activated cyclic nucleotide-gated channel 1 (HCN1) from Homo sapiens (Human).